The sequence spans 181 residues: Oligoribonuclease (181 aa).

The Exonuclease domain occupies 8 to 171 (LIWIDLEMTG…LDIQESIAEL (164 aa)). Tyr-129 is an active-site residue.

This sequence belongs to the oligoribonuclease family.

Its subcellular location is the cytoplasm. Functionally, 3'-to-5' exoribonuclease specific for small oligoribonucleotides. This chain is Oligoribonuclease, found in Shewanella amazonensis (strain ATCC BAA-1098 / SB2B).